A 206-amino-acid polypeptide reads, in one-letter code: Ribosomal RNA large subunit methyltransferase E (206 aa).

Positions 54, 56, 76, 94, and 118 each coordinate S-adenosyl-L-methionine. Residue Lys-158 is the Proton acceptor of the active site.

It belongs to the class I-like SAM-binding methyltransferase superfamily. RNA methyltransferase RlmE family.

It localises to the cytoplasm. It catalyses the reaction uridine(2552) in 23S rRNA + S-adenosyl-L-methionine = 2'-O-methyluridine(2552) in 23S rRNA + S-adenosyl-L-homocysteine + H(+). Its function is as follows. Specifically methylates the uridine in position 2552 of 23S rRNA at the 2'-O position of the ribose in the fully assembled 50S ribosomal subunit. The polypeptide is Ribosomal RNA large subunit methyltransferase E (Methanosphaera stadtmanae (strain ATCC 43021 / DSM 3091 / JCM 11832 / MCB-3)).